Here is a 200-residue protein sequence, read N- to C-terminus: Thymidine kinase (200 aa).

ATP contacts are provided by residues 15–22 (GSMFSGKS) and 88–91 (DEVQ). The active-site Proton acceptor is the Glu89. Zn(2+) is bound by residues Cys145, Cys148, Cys183, and His186.

Belongs to the thymidine kinase family. As to quaternary structure, homotetramer.

It localises to the cytoplasm. It catalyses the reaction thymidine + ATP = dTMP + ADP + H(+). This is Thymidine kinase from Bacillus pumilus (strain SAFR-032).